Here is a 278-residue protein sequence, read N- to C-terminus: Elongation factor Ts (278 aa).

The involved in Mg(2+) ion dislocation from EF-Tu stretch occupies residues 82-85 (TEPV).

It belongs to the EF-Ts family.

Its subcellular location is the cytoplasm. Functionally, associates with the EF-Tu.GDP complex and induces the exchange of GDP to GTP. It remains bound to the aminoacyl-tRNA.EF-Tu.GTP complex up to the GTP hydrolysis stage on the ribosome. The polypeptide is Elongation factor Ts (Cytophaga hutchinsonii (strain ATCC 33406 / DSM 1761 / CIP 103989 / NBRC 15051 / NCIMB 9469 / D465)).